The following is a 243-amino-acid chain: Pyridoxine 5'-phosphate synthase (243 aa).

Residue Asn9 coordinates 3-amino-2-oxopropyl phosphate. Asp11–His12 is a binding site for 1-deoxy-D-xylulose 5-phosphate. 3-amino-2-oxopropyl phosphate is bound at residue Arg20. His45 serves as the catalytic Proton acceptor. Arg47 and His52 together coordinate 1-deoxy-D-xylulose 5-phosphate. Residue Glu72 is the Proton acceptor of the active site. Thr102 is a binding site for 1-deoxy-D-xylulose 5-phosphate. His193 functions as the Proton donor in the catalytic mechanism. Residues Gly194 and Gly215–His216 contribute to the 3-amino-2-oxopropyl phosphate site.

This sequence belongs to the PNP synthase family. In terms of assembly, homooctamer; tetramer of dimers.

Its subcellular location is the cytoplasm. The catalysed reaction is 3-amino-2-oxopropyl phosphate + 1-deoxy-D-xylulose 5-phosphate = pyridoxine 5'-phosphate + phosphate + 2 H2O + H(+). Its pathway is cofactor biosynthesis; pyridoxine 5'-phosphate biosynthesis; pyridoxine 5'-phosphate from D-erythrose 4-phosphate: step 5/5. Functionally, catalyzes the complicated ring closure reaction between the two acyclic compounds 1-deoxy-D-xylulose-5-phosphate (DXP) and 3-amino-2-oxopropyl phosphate (1-amino-acetone-3-phosphate or AAP) to form pyridoxine 5'-phosphate (PNP) and inorganic phosphate. The protein is Pyridoxine 5'-phosphate synthase of Photorhabdus laumondii subsp. laumondii (strain DSM 15139 / CIP 105565 / TT01) (Photorhabdus luminescens subsp. laumondii).